Reading from the N-terminus, the 212-residue chain is 3-oxo-tetronate 4-phosphate decarboxylase (212 aa).

E79 acts as the Proton acceptor in catalysis. 3 residues coordinate Zn(2+): E79, H98, and H100. The Proton donor role is filled by Y125. H165 contributes to the Zn(2+) binding site.

The protein belongs to the aldolase class II family. AraD/FucA subfamily. Requires Zn(2+) as cofactor.

It carries out the reaction 3-dehydro-4-O-phospho-D-erythronate + H(+) = dihydroxyacetone phosphate + CO2. It catalyses the reaction 3-dehydro-4-O-phospho-L-erythronate + H(+) = dihydroxyacetone phosphate + CO2. Functionally, catalyzes the decarboxylation of 3-oxo-tetronate 4-phosphate to dihydroxyacetone phosphate (DHAP) and CO(2). In Escherichia coli O6:H1 (strain CFT073 / ATCC 700928 / UPEC), this protein is 3-oxo-tetronate 4-phosphate decarboxylase.